The sequence spans 300 residues: Ribosomal protein L11 methyltransferase (300 aa).

4 residues coordinate S-adenosyl-L-methionine: T152, G173, D195, and N234.

It belongs to the methyltransferase superfamily. PrmA family.

It localises to the cytoplasm. The enzyme catalyses L-lysyl-[protein] + 3 S-adenosyl-L-methionine = N(6),N(6),N(6)-trimethyl-L-lysyl-[protein] + 3 S-adenosyl-L-homocysteine + 3 H(+). In terms of biological role, methylates ribosomal protein L11. This is Ribosomal protein L11 methyltransferase from Paraburkholderia xenovorans (strain LB400).